The following is a 358-amino-acid chain: MKLLLAGGGTGGHLFPAVALAQRLLEQDSEAQVQFVGTARGIEARVLPEQGWPLELIDIRGFVNQGLLGKLRMIPCLIRSVWQGLCILRKFQPDVVLGVGGYASAPMLVAARLKRIPTVIHEQNAWPGLTNRLLGPWARCVCLSFSEAERAFHRAATIVTGNPLRKGMEGCPPMDGDAPELLVFGGSRGARAINDAMLEALPRLEPWKDRLRIVHQTGGDDLQRIREGYARAGWPQESVVPFIDDMAAAYARAHLVVCRAGATTLAELAACGRAAILIPYPHAAADHQTVNARAMAKKGAGLVLAQQNLTPETLASLITDLLENRPRLISMSAAAKSLGITGAADRILRVCRNVCGQD.

Residues 10 to 12, N124, R165, S187, I243, and Q288 contribute to the UDP-N-acetyl-alpha-D-glucosamine site; that span reads TGG.

This sequence belongs to the glycosyltransferase 28 family. MurG subfamily.

The protein localises to the cell inner membrane. The catalysed reaction is di-trans,octa-cis-undecaprenyl diphospho-N-acetyl-alpha-D-muramoyl-L-alanyl-D-glutamyl-meso-2,6-diaminopimeloyl-D-alanyl-D-alanine + UDP-N-acetyl-alpha-D-glucosamine = di-trans,octa-cis-undecaprenyl diphospho-[N-acetyl-alpha-D-glucosaminyl-(1-&gt;4)]-N-acetyl-alpha-D-muramoyl-L-alanyl-D-glutamyl-meso-2,6-diaminopimeloyl-D-alanyl-D-alanine + UDP + H(+). It participates in cell wall biogenesis; peptidoglycan biosynthesis. In terms of biological role, cell wall formation. Catalyzes the transfer of a GlcNAc subunit on undecaprenyl-pyrophosphoryl-MurNAc-pentapeptide (lipid intermediate I) to form undecaprenyl-pyrophosphoryl-MurNAc-(pentapeptide)GlcNAc (lipid intermediate II). This is UDP-N-acetylglucosamine--N-acetylmuramyl-(pentapeptide) pyrophosphoryl-undecaprenol N-acetylglucosamine transferase from Syntrophotalea carbinolica (strain DSM 2380 / NBRC 103641 / GraBd1) (Pelobacter carbinolicus).